Consider the following 300-residue polypeptide: B1 kinase (300 aa).

Positions 16 to 282 constitute a Protein kinase domain; it reads WVVGPLIGKG…ITMVNSLTYF (267 aa). Residues 22–30 and K45 each bind ATP; that span reads IGKGGFGSI. Residue D147 is the Proton acceptor of the active site.

Belongs to the protein kinase superfamily. Ser/Thr protein kinase family. Poxviruses subfamily. In terms of assembly, interacts with host JIP1; this interaction increases the amount of MAPK bound to JIP1 and subsequently increases the activity of transcription factors, such as JUN, that respond to these complexes. Interacts with protein OPG198; this interaction inhibits the repressive activity of OPG198 pseudokinase on viral replication factory formation. Mg(2+) is required as a cofactor. Autophosphorylated.

It is found in the virion. The protein resides in the host cytoplasm. The enzyme catalyses L-seryl-[protein] + ATP = O-phospho-L-seryl-[protein] + ADP + H(+). It carries out the reaction L-threonyl-[protein] + ATP = O-phospho-L-threonyl-[protein] + ADP + H(+). Essential serine/threonine-protein kinase that plays different role in the viral life cycle. Phosphorylates the host small ribosomal protein RACK1 thereby customizing the ribosomes to a state optimal for viral mRNAs (which contain poly-A leaders) but not for host mRNAs. Facilitates viral DNA replication by inhibiting host BANF1, a cellular host defense responsive to foreign DNA. Phosphorylates host BANF1 on serine and threonine residues; this leads to BANF1 relocalization to the cytoplasm, loss of dimerization and impaired DNA binding activity. Indeed, BANF1 activity depends on its DNA-binding property which is blocked by VPK1-mediated phosphorylation. Required for viral intermediate genes expression, probably by inhibiting host BANF1. Modulates cellular responses via host JUN by two different mechanisms, either by direct phosphorylation or by modulation of upstream JIP1-MAPK complexes. Seems to participate in the accumulation/processing of late proteins and thus in virion maturation. In addition, inhibits B12 repressive activity on viral DNA replication via a phosphorylation-dependent mechanism. The chain is B1 kinase (OPG187) from Bos taurus (Bovine).